The primary structure comprises 156 residues: Putative pre-16S rRNA nuclease (156 aa).

This sequence belongs to the YqgF nuclease family.

It is found in the cytoplasm. Could be a nuclease involved in processing of the 5'-end of pre-16S rRNA. The chain is Putative pre-16S rRNA nuclease from Nocardioides sp. (strain ATCC BAA-499 / JS614).